The following is a 166-amino-acid chain: Peptide deformylase (166 aa).

Cysteine 88 and histidine 130 together coordinate Fe cation. The active site involves glutamate 131. Histidine 134 lines the Fe cation pocket.

It belongs to the polypeptide deformylase family. The cofactor is Fe(2+).

It carries out the reaction N-terminal N-formyl-L-methionyl-[peptide] + H2O = N-terminal L-methionyl-[peptide] + formate. Removes the formyl group from the N-terminal Met of newly synthesized proteins. Requires at least a dipeptide for an efficient rate of reaction. N-terminal L-methionine is a prerequisite for activity but the enzyme has broad specificity at other positions. This Caldicellulosiruptor bescii (strain ATCC BAA-1888 / DSM 6725 / KCTC 15123 / Z-1320) (Anaerocellum thermophilum) protein is Peptide deformylase.